The chain runs to 275 residues: Hydroxyethylthiazole kinase (275 aa).

Position 53 (Met53) interacts with substrate. Residues Arg128 and Ser174 each coordinate ATP. A substrate-binding site is contributed by Gly201.

Belongs to the Thz kinase family. It depends on Mg(2+) as a cofactor.

The enzyme catalyses 5-(2-hydroxyethyl)-4-methylthiazole + ATP = 4-methyl-5-(2-phosphooxyethyl)-thiazole + ADP + H(+). It functions in the pathway cofactor biosynthesis; thiamine diphosphate biosynthesis; 4-methyl-5-(2-phosphoethyl)-thiazole from 5-(2-hydroxyethyl)-4-methylthiazole: step 1/1. Its function is as follows. Catalyzes the phosphorylation of the hydroxyl group of 4-methyl-5-beta-hydroxyethylthiazole (THZ). This is Hydroxyethylthiazole kinase from Kineococcus radiotolerans (strain ATCC BAA-149 / DSM 14245 / SRS30216).